Here is a 1749-residue protein sequence, read N- to C-terminus: Transposon Ty1-NL2 Gag-Pol polyprotein (1749 aa).

Polar residues-rich tracts occupy residues M1 to S23, T48 to S60, S71 to N97, and Q129 to F152. Disordered regions lie at residues M1 to N97, Q129 to P171, and G352 to T421. Residues T153–T165 show a composition bias toward low complexity. Residues N299 to H401 are RNA-binding. Over residues N402–S418 the composition is skewed to low complexity. Catalysis depends on D461, which acts as the For protease activity; shared with dimeric partner. Residues N583 to C640 form an integrase-type zinc finger-like region. Positions N660–P835 constitute an Integrase catalytic domain. D671 and D736 together coordinate Mg(2+). Positions P945 to Y1166 are disordered. A compositionally biased stretch (low complexity) spans S954–T963. Residues S999–T1009 show a composition bias toward polar residues. Positions E1032–S1047 are enriched in basic and acidic residues. Composition is skewed to polar residues over residues Y1048 to E1076 and S1089 to L1100. Residues K1172 to R1206 carry the Bipartite nuclear localization signal motif. Residues N1332–Q1470 enclose the Reverse transcriptase Ty1/copia-type domain. The Mg(2+) site is built by D1340, D1421, D1422, D1604, E1646, and D1679. Residues D1604–K1746 form the RNase H Ty1/copia-type domain.

In terms of assembly, the capsid protein forms a homotrimer, from which the VLPs are assembled. The protease is a homodimer, whose active site consists of two apposed aspartic acid residues. Initially, virus-like particles (VLPs) are composed of the structural unprocessed proteins Gag and Gag-Pol, and also contain the host initiator methionine tRNA (tRNA(i)-Met) which serves as a primer for minus-strand DNA synthesis, and a dimer of genomic Ty RNA. Processing of the polyproteins occurs within the particle and proceeds by an ordered pathway, called maturation. First, the protease (PR) is released by autocatalytic cleavage of the Gag-Pol polyprotein yielding capsid protein p45 and a Pol-p154 precursor protein. This cleavage is a prerequisite for subsequent processing of Pol-p154 at the remaining sites to release the mature structural and catalytic proteins. Maturation takes place prior to the RT reaction and is required to produce transposition-competent VLPs.

The protein resides in the cytoplasm. The protein localises to the nucleus. It catalyses the reaction DNA(n) + a 2'-deoxyribonucleoside 5'-triphosphate = DNA(n+1) + diphosphate. The enzyme catalyses Endonucleolytic cleavage to 5'-phosphomonoester.. Functionally, capsid protein (CA) is the structural component of the virus-like particle (VLP), forming the shell that encapsulates the retrotransposons dimeric RNA genome. The particles are assembled from trimer-clustered units and there are holes in the capsid shells that allow for the diffusion of macromolecules. CA also has nucleocapsid-like chaperone activity, promoting primer tRNA(i)-Met annealing to the multipartite primer-binding site (PBS), dimerization of Ty1 RNA and initiation of reverse transcription. The aspartyl protease (PR) mediates the proteolytic cleavages of the Gag and Gag-Pol polyproteins after assembly of the VLP. Its function is as follows. Reverse transcriptase/ribonuclease H (RT) is a multifunctional enzyme that catalyzes the conversion of the retro-elements RNA genome into dsDNA within the VLP. The enzyme displays a DNA polymerase activity that can copy either DNA or RNA templates, and a ribonuclease H (RNase H) activity that cleaves the RNA strand of RNA-DNA heteroduplexes during plus-strand synthesis and hydrolyzes RNA primers. The conversion leads to a linear dsDNA copy of the retrotransposon that includes long terminal repeats (LTRs) at both ends. In terms of biological role, integrase (IN) targets the VLP to the nucleus, where a subparticle preintegration complex (PIC) containing at least integrase and the newly synthesized dsDNA copy of the retrotransposon must transit the nuclear membrane. Once in the nucleus, integrase performs the integration of the dsDNA into the host genome. The protein is Transposon Ty1-NL2 Gag-Pol polyprotein (TY1B-NL2) of Saccharomyces cerevisiae (strain ATCC 204508 / S288c) (Baker's yeast).